We begin with the raw amino-acid sequence, 286 residues long: Translocon-associated protein subunit alpha (286 aa).

A signal peptide spans 1 to 21 (MRLLPRLLLLFLLAFPAAVLL). At 22-207 (RGGPGGSLAL…EREDGLDGET (186 aa)) the chain is on the lumenal side. Over residues 46 to 75 (IIEDEDDEAEVEEDEPTDLAEDKEEEDVSS) the composition is skewed to acidic residues. The disordered stretch occupies residues 46 to 83 (IIEDEDDEAEVEEDEPTDLAEDKEEEDVSSEPEASPSA). N-linked (GlcNAc...) asparagine glycosylation is found at Asn136 and Asn191. The helical transmembrane segment at 208 to 228 (IFMYMFLAGLGLLVVVGLHQL) threads the bilayer. At 229–286 (LESRKRKRPIQKVEMGTSSQNDVDMSWIPQETLNQINKASPRRQPRKRAQKRSVGSDE) the chain is on the cytoplasmic side. The tract at residues 236–286 (RPIQKVEMGTSSQNDVDMSWIPQETLNQINKASPRRQPRKRAQKRSVGSDE) is disordered. The span at 244-266 (GTSSQNDVDMSWIPQETLNQINK) shows a compositional bias: polar residues. Ser247 carries the post-translational modification Phosphoserine. Thr260 carries the phosphothreonine modification. Ser268 bears the Phosphoserine mark. Basic residues predominate over residues 268 to 279 (SPRRQPRKRAQK).

Belongs to the TRAP-alpha family. As to quaternary structure, heterotetramer of TRAP-alpha, TRAP-beta, TRAP-delta and TRAP-gamma. Interacts with palmitoylated calnexin (CALX), the interaction is required for efficient folding of glycosylated proteins.

The protein resides in the endoplasmic reticulum membrane. In terms of biological role, TRAP proteins are part of a complex whose function is to bind calcium to the ER membrane and thereby regulate the retention of ER resident proteins. May be involved in the recycling of the translocation apparatus after completion of the translocation process or may function as a membrane-bound chaperone facilitating folding of translocated proteins. In Mus musculus (Mouse), this protein is Translocon-associated protein subunit alpha (Ssr1).